Consider the following 538-residue polypeptide: Importin subunit alpha-4 (538 aa).

The IBB domain occupies 1-58; that stretch reads MSLRPSTRAELRKKIYKTGVDADEARRRREDNLVEIRKNKREDSLLKKRREGMMLQQQ. 8 ARM repeats span residues 112-152, 155-194, 197-237, 239-278, 281-320, 323-363, 366-405, and 409-448; these read SPPI…NVAS, SDHT…NVAG, PNCR…NFCR, KPPT…YLSD, NDKI…NIVT, DSQT…NITA, KLQI…NATS, and HEQI…NILK.

It belongs to the importin alpha family. Forms a complex with importin subunit beta-1. Interacts with A.tumefaciens VirD2 and VirE2.

Its subcellular location is the nucleus envelope. Its function is as follows. Binds to conventional NLS motifs and mediates nuclear protein import across the nuclear envelope. Acts as a cellular receptor for the nuclear import of the virD2 protein of Agrobacterium and is essential for Agrobacterium-mediated root transformation. This is Importin subunit alpha-4 from Arabidopsis thaliana (Mouse-ear cress).